A 452-amino-acid polypeptide reads, in one-letter code: Heat shock protein 83 (452 aa).

Arg-124 is an ATP binding site. The TPR repeat-binding signature appears at 448 to 452; that stretch reads MEQVD.

The protein belongs to the heat shock protein 90 family. Homodimer.

The protein localises to the cytoplasm. Its function is as follows. Molecular chaperone that promotes the maturation, structural maintenance and proper regulation of specific target proteins involved for instance in cell cycle control and signal transduction. Undergoes a functional cycle that is linked to its ATPase activity. This cycle probably induces conformational changes in the client proteins, thereby causing their activation. Interacts dynamically with various co-chaperones that modulate its substrate recognition, ATPase cycle and chaperone function. The polypeptide is Heat shock protein 83 (HSP83) (Leishmania donovani).